A 420-amino-acid chain; its full sequence is Glutamyl-tRNA reductase (420 aa).

Residues 49–52 (TCNR), serine 107, 112–114 (EPQ), and glutamine 118 contribute to the substrate site. Cysteine 50 serves as the catalytic Nucleophile. 187-192 (GAGETI) is a binding site for NADP(+).

The protein belongs to the glutamyl-tRNA reductase family. As to quaternary structure, homodimer.

It catalyses the reaction (S)-4-amino-5-oxopentanoate + tRNA(Glu) + NADP(+) = L-glutamyl-tRNA(Glu) + NADPH + H(+). It participates in porphyrin-containing compound metabolism; protoporphyrin-IX biosynthesis; 5-aminolevulinate from L-glutamyl-tRNA(Glu): step 1/2. Its function is as follows. Catalyzes the NADPH-dependent reduction of glutamyl-tRNA(Glu) to glutamate 1-semialdehyde (GSA). The protein is Glutamyl-tRNA reductase of Nitrosococcus oceani (strain ATCC 19707 / BCRC 17464 / JCM 30415 / NCIMB 11848 / C-107).